The chain runs to 319 residues: Malate dehydrogenase (319 aa).

NAD(+) is bound by residues 10-15 and Asp34; that span reads GAGNIG. Substrate is bound by residues Arg83 and Arg89. Residues Asn96 and 119 to 121 contribute to the NAD(+) site; that span reads ITN. Residues Asn121 and Arg152 each contribute to the substrate site. Catalysis depends on His176, which acts as the Proton acceptor.

It belongs to the LDH/MDH superfamily. MDH type 3 family.

The enzyme catalyses (S)-malate + NAD(+) = oxaloacetate + NADH + H(+). Its function is as follows. Catalyzes the reversible oxidation of malate to oxaloacetate. The polypeptide is Malate dehydrogenase (Francisella tularensis subsp. mediasiatica (strain FSC147)).